Reading from the N-terminus, the 183-residue chain is Protein Dr1 (183 aa).

Residues 19 to 82 (TLPRASINKI…INAEHVLEAL (64 aa)) enclose the Histone-fold domain. The segment at 92 to 183 (QEAEAVLHDC…DDDDDDDDDY (92 aa)) is repression of TATA-containing promoters. The tract at residues 155–183 (AMVQRPPLADGSVASKPSEDDDDDDDDDY) is disordered. Acidic residues predominate over residues 173–183 (EDDDDDDDDDY).

This sequence belongs to the NC2 beta/DR1 family. As to quaternary structure, component of the Ada2a-containing (ATAC) complex composed of at least Ada2a, Atac1, Hcf, Ada3, Gcn5, Mocs2B, Charac-14, Atac3, Atac2, NC2beta and wds. Homodimer. Interacts with NC2-alpha/Drap1 to form the dNC2 complex.

Its subcellular location is the nucleus. In terms of biological role, bifunctional basic transcription factor. Activates transcription of DPE (Downstream Promoter Element) containing promoters while repressing transcription of promoters which contain TATA elements. Together with Chrac-14, promotes nucleosome sliding of ATP-dependent nucleosome remodeling complexes. This chain is Protein Dr1 (NC2beta), found in Drosophila melanogaster (Fruit fly).